The following is a 196-amino-acid chain: uncharacterized protein (196 aa).

This sequence to H.influenzae HI_0431.

This is an uncharacterized protein from Salmonella typhi.